A 64-amino-acid chain; its full sequence is Carnocyclin-A (64 aa).

The propeptide occupies 1–4 (MLYE). Positions 5-64 (LVAYGIAQGTAEKVVSLINAGLTVGSIISILGGVTVGLSGVFTAVKAAIAKQGIKKAIQL) form a cross-link, cyclopeptide (Leu-Leu).

Its subcellular location is the secreted. In terms of biological role, cyclopeptide antibiotic that inhibits the growth of Gram-positive bacteria, but has no effect on the growth of Gram-negative bacteria. This is Carnocyclin-A from Carnobacterium maltaromaticum (Carnobacterium piscicola).